The following is a 417-amino-acid chain: MRDDQIFNLIEKEKLREKEHIKLIASENFTSLEIRQAVGSILTNKYAEGYPLNRYYGGCSFVDEIESLAILRAKELFGAKYANVQPHSGSQANMAAIMALINPGDRILGMQLSHGGHLTHGSRVNFSGIFFNTYFYGVSRDSELIDYDEVLKIARDCRPNLIIAGASSYSREIDFKKFREIADDVSAYLLCDIAHIAGLIVAGFHNSSIDVAHLTTSTTHKTLRGPRGGIILSGKDFDKLVTFNGKEKALFNAVNSTVFPGTQGGPLVHVIAGKAIAFREALQESFREYIANVIKNTKVMAEYFKSEGFRIVSGGTDNHLFLVDLSNLDLTGADAEKLLEGVNITLNKNAIPFDKKSPSLASGIRIGGAAITSRGLNENDSLNVAKFIVRALKTRSDIELKQIKKEVVRFIRDFDMP.

(6S)-5,6,7,8-tetrahydrofolate is bound by residues L112 and 116-118 (GHL). K221 carries the post-translational modification N6-(pyridoxal phosphate)lysine. E247 contacts (6S)-5,6,7,8-tetrahydrofolate.

Belongs to the SHMT family. In terms of assembly, homodimer. Pyridoxal 5'-phosphate serves as cofactor.

The protein resides in the cytoplasm. It carries out the reaction (6R)-5,10-methylene-5,6,7,8-tetrahydrofolate + glycine + H2O = (6S)-5,6,7,8-tetrahydrofolate + L-serine. The protein operates within one-carbon metabolism; tetrahydrofolate interconversion. It participates in amino-acid biosynthesis; glycine biosynthesis; glycine from L-serine: step 1/1. In terms of biological role, catalyzes the reversible interconversion of serine and glycine with tetrahydrofolate (THF) serving as the one-carbon carrier. This reaction serves as the major source of one-carbon groups required for the biosynthesis of purines, thymidylate, methionine, and other important biomolecules. Also exhibits THF-independent aldolase activity toward beta-hydroxyamino acids, producing glycine and aldehydes, via a retro-aldol mechanism. This Borrelia garinii subsp. bavariensis (strain ATCC BAA-2496 / DSM 23469 / PBi) (Borreliella bavariensis) protein is Serine hydroxymethyltransferase.